Reading from the N-terminus, the 872-residue chain is Probable cation-transporting P-type ATPase (872 aa).

Residues 1 to 41 (MNKWTGLSAAAVLESRAQHGANLIPTKKLTPFWLLFLEQFK) lie on the Cytoplasmic side of the membrane. A helical transmembrane segment spans residues 42–62 (SLVVILLLVATILSLVVAIIS). Residues 63 to 79 (GVNANWLFDHNLVIEWT) lie on the Extracellular side of the membrane. Residues 80-100 (QPFVILITVLANSLIGSIQEF) form a helical membrane-spanning segment. The Cytoplasmic portion of the chain corresponds to 101 to 237 (KAQKSAHTLK…TKLSPLQQKL (137 aa)). The helical transmembrane segment at 238-257 (EKVGKWFSWFGLGLFVVVFL) threads the bilayer. The Extracellular segment spans residues 258 to 275 (VQLGLLGFHNFSANWSIA). Residues 276-293 (LIGAIALVVAIIPEGLVT) traverse the membrane as a helical segment. Residues 294 to 642 (FINVIFALSV…EQGRKTFLTC (349 aa)) are Cytoplasmic-facing. Asp-331 serves as the catalytic 4-aspartylphosphate intermediate. Residues Asp-587 and Asp-591 each contribute to the Mg(2+) site. Residues 643-662 (KRVLFNLFLTSIAGTIVVLL) form a helical membrane-spanning segment. At 663-685 (GLFVLGEVFREQLSKANHNFQVF) the chain is on the extracellular side. Residues 686 to 706 (TPTQLLIINLFVHGFPAVALA) traverse the membrane as a helical segment. Topologically, residues 707 to 724 (IQPVQEKLMLKPFSTKNL) are cytoplasmic. A helical transmembrane segment spans residues 725–747 (FYNRGGFDLIWQSLLLSFLTLLF). Topologically, residues 748–768 (YSLGMVYAINDPELGKSGDLI) are extracellular. The helical transmembrane segment at 769 to 788 (NRAGATCGFMVLGGSAALNS) threads the bilayer. Over 789-801 (LNLMVDRPLVATN) the chain is Cytoplasmic. A helical transmembrane segment spans residues 802 to 824 (PKHYGIVWLGALSSIFVFLLIIF). The Extracellular portion of the chain corresponds to 825–842 (INPLGLVFSTLKDLTAHP). Residues 843 to 863 (VLIGYSFGGVLLYMTINEVVK) traverse the membrane as a helical segment. Topologically, residues 864–872 (LIRLSYGSV) are cytoplasmic.

It belongs to the cation transport ATPase (P-type) (TC 3.A.3) family. Type II subfamily.

It localises to the cell membrane. The enzyme catalyses ATP + H2O = ADP + phosphate + H(+). Its function is as follows. Could mediate calcium influx. This chain is Probable cation-transporting P-type ATPase (pacL), found in Mycoplasma pneumoniae (strain ATCC 29342 / M129 / Subtype 1) (Mycoplasmoides pneumoniae).